Consider the following 550-residue polypeptide: Calcium-dependent protein kinase 20 (550 aa).

Residues 1–58 (MGNCCVTPEGSGRGRKKQQQEQKQKQKEPKQQQQQQKKGKKPNPFSIEYNRSSAPSGH) form a disordered region. Glycine 2 carries the N-myristoyl glycine lipid modification. The span at 18-30 (QQQEQKQKQKEPK) shows a compositional bias: basic and acidic residues. Positions 75–333 (YELGGELGRG…AQQVLDHPWL (259 aa)) constitute a Protein kinase domain. ATP-binding positions include 81–89 (LGRGEFGVT) and lysine 104. Catalysis depends on aspartate 199, which acts as the Proton acceptor. The segment at 339-369 (APNVNLGETVKARLQQFSVMNKFKKHALRVI) is autoinhibitory domain. 4 EF-hand domains span residues 376–411 (EEVA…LGHQ), 412–447 (MADA…LRKI), 448–483 (GNDE…DLGA), and 484–519 (NHEE…GTDW). Ca(2+) is bound by residues aspartate 389, asparagine 391, aspartate 393, methionine 395, glutamate 400, aspartate 425, aspartate 427, asparagine 429, serine 431, glutamate 436, aspartate 461, asparagine 463, serine 465, tyrosine 467, glutamate 472, aspartate 497, aspartate 499, aspartate 501, lysine 503, and glutamate 508.

The protein belongs to the protein kinase superfamily. Ser/Thr protein kinase family. CDPK subfamily. In terms of tissue distribution, expressed in roots and leaf blades.

It localises to the membrane. It carries out the reaction L-seryl-[protein] + ATP = O-phospho-L-seryl-[protein] + ADP + H(+). The enzyme catalyses L-threonyl-[protein] + ATP = O-phospho-L-threonyl-[protein] + ADP + H(+). Its activity is regulated as follows. Activated by calcium. Autophosphorylation may play an important role in the regulation of the kinase activity. Its function is as follows. May play a role in signal transduction pathways that involve calcium as a second messenger. This chain is Calcium-dependent protein kinase 20, found in Oryza sativa subsp. japonica (Rice).